Consider the following 354-residue polypeptide: Uroporphyrinogen decarboxylase (354 aa).

Substrate is bound by residues 27-31 (RQAGR), D77, Y154, T209, and H327.

Belongs to the uroporphyrinogen decarboxylase family. As to quaternary structure, homodimer.

The protein localises to the cytoplasm. The catalysed reaction is uroporphyrinogen III + 4 H(+) = coproporphyrinogen III + 4 CO2. It functions in the pathway porphyrin-containing compound metabolism; protoporphyrin-IX biosynthesis; coproporphyrinogen-III from 5-aminolevulinate: step 4/4. Its function is as follows. Catalyzes the decarboxylation of four acetate groups of uroporphyrinogen-III to yield coproporphyrinogen-III. In Escherichia coli O17:K52:H18 (strain UMN026 / ExPEC), this protein is Uroporphyrinogen decarboxylase.